The primary structure comprises 401 residues: Imidazolonepropionase (401 aa).

Positions 66 and 68 each coordinate Fe(3+). The Zn(2+) site is built by histidine 66 and histidine 68. 3 residues coordinate 4-imidazolone-5-propanoate: arginine 75, tyrosine 138, and histidine 171. Tyrosine 138 contributes to the N-formimidoyl-L-glutamate binding site. Residue histidine 236 coordinates Fe(3+). Histidine 236 serves as a coordination point for Zn(2+). Glutamine 239 is a binding site for 4-imidazolone-5-propanoate. Aspartate 311 contributes to the Fe(3+) binding site. Aspartate 311 contacts Zn(2+). N-formimidoyl-L-glutamate is bound by residues asparagine 313 and glycine 315. A 4-imidazolone-5-propanoate-binding site is contributed by threonine 316.

It belongs to the metallo-dependent hydrolases superfamily. HutI family. Zn(2+) is required as a cofactor. The cofactor is Fe(3+).

The protein localises to the cytoplasm. The enzyme catalyses 4-imidazolone-5-propanoate + H2O = N-formimidoyl-L-glutamate. The protein operates within amino-acid degradation; L-histidine degradation into L-glutamate; N-formimidoyl-L-glutamate from L-histidine: step 3/3. Its function is as follows. Catalyzes the hydrolytic cleavage of the carbon-nitrogen bond in imidazolone-5-propanoate to yield N-formimidoyl-L-glutamate. It is the third step in the universal histidine degradation pathway. The sequence is that of Imidazolonepropionase from Pseudomonas putida (strain ATCC 47054 / DSM 6125 / CFBP 8728 / NCIMB 11950 / KT2440).